The following is a 311-amino-acid chain: MNKKSTAIFLMGPTASGKTDLAIQLHQELPVEVISVDSALIYKGMDIGTAKPNAQELALTPHRLIDIKDPSENYSAAEFRRDALREMQKITQQGKIPLLVGGTMLYYKALLEGLSPLPSADEKVRLEIEQKAEKFGWATLHNELAKIDPISAQRINPNDSQRINRALEVFYLTGQSLTELTAQKGEEIPYHIIHFAIAPERAVLHQRIEQRFHKMIEQGFQQEVEKLYQRSDLHPNLPSIRCVGYRQMWEYLQGNYGKDEMIFRGICATRQLAKRQLTWLRGWKSPIEWLDSLNPKSAKEKIIKTIKHNCK.

12–19 serves as a coordination point for ATP; sequence GPTASGKT. 14–19 contacts substrate; the sequence is TASGKT. Interaction with substrate tRNA stretches follow at residues 37 to 40, 161 to 165, and 241 to 246; these read DSAL, QRINR, and RCVGYR.

This sequence belongs to the IPP transferase family. In terms of assembly, monomer. Requires Mg(2+) as cofactor.

The catalysed reaction is adenosine(37) in tRNA + dimethylallyl diphosphate = N(6)-dimethylallyladenosine(37) in tRNA + diphosphate. In terms of biological role, catalyzes the transfer of a dimethylallyl group onto the adenine at position 37 in tRNAs that read codons beginning with uridine, leading to the formation of N6-(dimethylallyl)adenosine (i(6)A). This is tRNA dimethylallyltransferase from Histophilus somni (strain 2336) (Haemophilus somnus).